We begin with the raw amino-acid sequence, 371 residues long: Bifunctional enzyme IspD/IspF (371 aa).

Positions 1-210 (MLDISLIMLS…LNLPKPSWDI (210 aa)) are 2-C-methyl-D-erythritol 4-phosphate cytidylyltransferase. The interval 211 to 371 (FNGNGFDVHE…NLKYFDWMKL (161 aa)) is 2-C-methyl-D-erythritol 2,4-cyclodiphosphate synthase. A divalent metal cation is bound by residues aspartate 217 and histidine 219. 4-CDP-2-C-methyl-D-erythritol 2-phosphate is bound by residues 217-219 (DVH) and 243-244 (HS). Histidine 251 contacts a divalent metal cation. 4-CDP-2-C-methyl-D-erythritol 2-phosphate contacts are provided by residues 265–267 (DIG), 270–274 (FPDND), 341–344 (TTTE), phenylalanine 348, and arginine 351.

The protein in the N-terminal section; belongs to the IspD/TarI cytidylyltransferase family. IspD subfamily. This sequence in the C-terminal section; belongs to the IspF family. The cofactor is a divalent metal cation.

The catalysed reaction is 2-C-methyl-D-erythritol 4-phosphate + CTP + H(+) = 4-CDP-2-C-methyl-D-erythritol + diphosphate. The enzyme catalyses 4-CDP-2-C-methyl-D-erythritol 2-phosphate = 2-C-methyl-D-erythritol 2,4-cyclic diphosphate + CMP. It functions in the pathway isoprenoid biosynthesis; isopentenyl diphosphate biosynthesis via DXP pathway; isopentenyl diphosphate from 1-deoxy-D-xylulose 5-phosphate: step 2/6. It participates in isoprenoid biosynthesis; isopentenyl diphosphate biosynthesis via DXP pathway; isopentenyl diphosphate from 1-deoxy-D-xylulose 5-phosphate: step 4/6. Its function is as follows. Bifunctional enzyme that catalyzes the formation of 4-diphosphocytidyl-2-C-methyl-D-erythritol from CTP and 2-C-methyl-D-erythritol 4-phosphate (MEP) (IspD), and catalyzes the conversion of 4-diphosphocytidyl-2-C-methyl-D-erythritol 2-phosphate (CDP-ME2P) to 2-C-methyl-D-erythritol 2,4-cyclodiphosphate (ME-CPP) with a corresponding release of cytidine 5-monophosphate (CMP) (IspF). In Campylobacter lari (strain RM2100 / D67 / ATCC BAA-1060), this protein is Bifunctional enzyme IspD/IspF.